The primary structure comprises 112 residues: uncharacterized protein (112 aa).

A signal peptide spans 1–21 (MKTLFTSVVLCGALVVSSSFA). 2 consecutive HhH domains span residues 49–79 (DKLNINTATASEIQKSLTGIGAKKAEAIVQY) and 80–109 (REKHGNFXNAEQLLEVQGIGKATLEKNRDR).

This is an uncharacterized protein from Haemophilus influenzae (strain ATCC 51907 / DSM 11121 / KW20 / Rd).